Reading from the N-terminus, the 284-residue chain is Bifunctional protein FolD (284 aa).

NADP(+) is bound by residues 165–167, Ser-190, and Ile-231; that span reads GRS.

Belongs to the tetrahydrofolate dehydrogenase/cyclohydrolase family. In terms of assembly, homodimer.

It catalyses the reaction (6R)-5,10-methylene-5,6,7,8-tetrahydrofolate + NADP(+) = (6R)-5,10-methenyltetrahydrofolate + NADPH. The catalysed reaction is (6R)-5,10-methenyltetrahydrofolate + H2O = (6R)-10-formyltetrahydrofolate + H(+). Its pathway is one-carbon metabolism; tetrahydrofolate interconversion. In terms of biological role, catalyzes the oxidation of 5,10-methylenetetrahydrofolate to 5,10-methenyltetrahydrofolate and then the hydrolysis of 5,10-methenyltetrahydrofolate to 10-formyltetrahydrofolate. This Streptococcus thermophilus (strain CNRZ 1066) protein is Bifunctional protein FolD.